Here is a 213-residue protein sequence, read N- to C-terminus: Large ribosomal subunit protein uL1 (213 aa).

Belongs to the universal ribosomal protein uL1 family. Part of the 50S ribosomal subunit.

Binds directly to 23S rRNA. Probably involved in E site tRNA release. Functionally, protein L1 is also a translational repressor protein, it controls the translation of its operon by binding to its mRNA. This is Large ribosomal subunit protein uL1 from Methanosarcina barkeri (strain Fusaro / DSM 804).